A 245-amino-acid polypeptide reads, in one-letter code: Nodulation protein G (245 aa).

11–35 contributes to the NAD(+) binding site; it reads VTGASGAIGGAIARVLHAQGAIVGL. Position 139 (serine 139) interacts with substrate. Tyrosine 152 functions as the Proton acceptor in the catalytic mechanism.

The protein belongs to the short-chain dehydrogenases/reductases (SDR) family.

Functionally, proposed to modify Nod factor fatty acyl chain. The chain is Nodulation protein G (nodG) from Rhizobium meliloti (strain 1021) (Ensifer meliloti).